The following is a 342-amino-acid chain: Phomopsin biosynthesis cluster protein B (342 aa).

Positions Met1–Pro22 are disordered. The helical transmembrane segment at Val87–Ala107 threads the bilayer. The interval Cys118–Gln186 is disordered. The segment covering His144–Asn155 has biased composition (low complexity). Residue Asn248 is glycosylated (N-linked (GlcNAc...) asparagine).

It localises to the membrane. Its function is as follows. Part of the gene cluster that mediates the biosynthesis of the phomopsins, a group of hexapeptide mycotoxins which infects lupins and causes lupinosis disease in livestock. The role of phomB within the phomopsins biosynthesis pathway has still to be determined. The pathway starts with the processing of the precursor phomA by several endopeptidases including kexin proteases as well as the cluster-specific S41 family peptidase phomP1 and the oligopeptidase phomG to produce 10 identical copies of the hexapeptide Tyr-Val-Ile-Pro-Ile-Asp. After being excised from the precursor peptide, the core peptides are cyclized and modified post-translationally by enzymes encoded within the gene cluster. The timing and order of proteolysis of the phomA precursor and PTMs are still unknown. Two tyrosinase-like enzymes, phomQ1 and phomQ2, catalyze the chlorination and hydroxylation of Tyr, respectively. PhomYb, is proposed to be involved in the construction of the macrocyclic structure. The other 4 ustYa family proteins may be involved in PTMs that generate the unique structure of phomopsin A. PhomYa is required for the hydroxylation of C-beta of Tyr. PhomYc, phomYd, and phomYe are responsible for the biosynthesis of 2,3-dehydroisoleucine (dIle), 2,3-dehydroaspartic acid (dAsp), and 3,4-dehydroproline (dPro), respectively. While dIle formation by phomYc is indispensable for the installation of dAsp by phomYd, the order of the other PTMs have not been elucidated yet. Most of the biosynthetic enzymes likely have broad substrate specificity, and thus, there might be a metabolic grid from a precursor to phomopsin A. The enzyme(s) responsible for the biosynthesis of 3,4-dehydrovaline (dVal) have also not been identified yet. Finally, phomM acts as an S-adenosylmethionine-dependent alpha-N-methyltransferase that catalyzes two successive N-methylation reactions, converting N-desmethyl-phomopsin A to phomopsin A and phomopsin A further to an N,N-dimethylated congener called phomopsin E. This chain is Phomopsin biosynthesis cluster protein B, found in Diaporthe leptostromiformis (Lupinosis disease fungus).